A 95-amino-acid chain; its full sequence is Mitochondrial import inner membrane translocase subunit Tim13 (95 aa).

Met-1 is subject to N-acetylmethionine. Residue Ser-7 is modified to Phosphoserine. The Twin CX3C motif motif lies at 46–69; the sequence is CFRKCIGKPGGSLDNSEQKCIAMC. Intrachain disulfides connect Cys-46-Cys-69 and Cys-50-Cys-65. Position 53 is an N6-succinyllysine (Lys-53).

Belongs to the small Tim family. In terms of assembly, heterohexamer; composed of 3 copies of TIMM8 (TIMM8A or TIMM8B) and 3 copies of TIMM13, named soluble 70 kDa complex. Associates with the TIM22 complex, whose core is composed of TIMM22. As to expression, present at high level in liver and brain, and at lower level in muscle and heart. In CNS sections, it is predominantly present in the soma and the dendritic portion of the Purkinje cells of the cerebellum, but not in the glial cells. Scattered expression also is also detected in the brain stem, olfactory bulb, substantia nigra, hippocampus and striatum (at protein level).

It is found in the mitochondrion inner membrane. Its function is as follows. Mitochondrial intermembrane chaperone that participates in the import and insertion of some multi-pass transmembrane proteins into the mitochondrial inner membrane. Also required for the transfer of beta-barrel precursors from the TOM complex to the sorting and assembly machinery (SAM complex) of the outer membrane. Acts as a chaperone-like protein that protects the hydrophobic precursors from aggregation and guide them through the mitochondrial intermembrane space. The TIMM8-TIMM13 complex mediates the import of proteins such as TIMM23, SLC25A12/ARALAR1 and SLC25A13/ARALAR2, while the predominant TIMM9-TIMM10 70 kDa complex mediates the import of much more proteins. The sequence is that of Mitochondrial import inner membrane translocase subunit Tim13 (Timm13) from Mus musculus (Mouse).